A 468-amino-acid polypeptide reads, in one-letter code: Aldehyde dehydrogenase family 3 member B1 (468 aa).

N-acetylmethionine is present on Met1. 188 to 193 (GNAYVG) is an NAD(+) binding site. Residues Glu210 and Cys244 contribute to the active site. Residues Cys462 and Cys463 are each lipidated (S-palmitoyl cysteine). Cys465 carries the post-translational modification Cysteine methyl ester. Residue Cys465 is the site of S-geranylgeranyl cysteine attachment. Positions 466 to 468 (TLL) are cleaved as a propeptide — removed in mature form.

It belongs to the aldehyde dehydrogenase family. In terms of processing, dually lipidated in the C-terminus; prenylation occurs prior to, and is a prerequisite for palmitoylation. It is also required for activity towards long-chain substrates. As to expression, highly expressed in kidney and liver. In brain is expressed at moderate levels in cortex, striatum and hippocampus, and at lower levels in brainstem and cerebellum.

The protein localises to the cell membrane. It catalyses the reaction an aldehyde + NAD(+) + H2O = a carboxylate + NADH + 2 H(+). The catalysed reaction is a long-chain fatty aldehyde + NAD(+) + H2O = a long-chain fatty acid + NADH + 2 H(+). The enzyme catalyses a medium-chain fatty aldehyde + NAD(+) + H2O = a medium-chain fatty acid + NADH + 2 H(+). It carries out the reaction octanal + NAD(+) + H2O = octanoate + NADH + 2 H(+). It catalyses the reaction nonanal + NAD(+) + H2O = nonanoate + NADH + 2 H(+). The catalysed reaction is hexadecanoate + NADH + 2 H(+) = hexadecanal + NAD(+) + H2O. The enzyme catalyses (2E)-octenal + NAD(+) + H2O = (2E)-octenoate + NADH + 2 H(+). It carries out the reaction (E)-non-2-enal + NAD(+) + H2O = (E)-non-2-enoate + NADH + 2 H(+). It catalyses the reaction (E)-4-hydroxynon-2-enal + NAD(+) + H2O = (E)-4-hydroxynon-2-enoate + NADH + 2 H(+). The catalysed reaction is (2E)-hexadecenal + NAD(+) + H2O = (E)-hexadec-2-enoate + NADH + 2 H(+). The enzyme catalyses benzaldehyde + NAD(+) + H2O = benzoate + NADH + 2 H(+). It carries out the reaction an aldehyde + NADP(+) + H2O = a carboxylate + NADPH + 2 H(+). It catalyses the reaction a medium-chain fatty aldehyde + NADP(+) + H2O = a medium-chain fatty acid + NADPH + 2 H(+). The catalysed reaction is hexanal + NADP(+) + H2O = hexanoate + NADPH + 2 H(+). The enzyme catalyses octanal + NADP(+) + H2O = octanoate + NADPH + 2 H(+). It carries out the reaction nonanal + NADP(+) + H2O = nonanoate + NADPH + 2 H(+). It catalyses the reaction (2E)-octenal + NADP(+) + H2O = (2E)-octenoate + NADPH + 2 H(+). The catalysed reaction is (E)-non-2-enal + NADP(+) + H2O = (E)-non-2-enoate + NADPH + 2 H(+). The enzyme catalyses (E)-4-hydroxynon-2-enal + NADP(+) + H2O = (E)-4-hydroxynon-2-enoate + NADPH + 2 H(+). It carries out the reaction benzaldehyde + NADP(+) + H2O = benzoate + NADPH + 2 H(+). The protein operates within alcohol metabolism; ethanol degradation; acetate from ethanol: step 2/2. Its function is as follows. Oxidizes medium and long chain saturated and unsaturated fatty aldehydes generated in the plasma membrane into non-toxic fatty acids. May have a protective role against the cytotoxicity induced by lipid peroxidation. Short-chain fatty aldehydes are not good substrates. Can use both NADP(+) and NAD(+) as electron acceptor in vitro, however in vivo preference will depend on their tissue levels. Low activity towards acetaldehyde and 3,4-dihydroxyphenylacetaldehyde. Able to metabolize aromatic aldehydes such as benzaldehyde to their acid form. This chain is Aldehyde dehydrogenase family 3 member B1 (Aldh3b1), found in Mus musculus (Mouse).